Consider the following 502-residue polypeptide: Zinc finger protein 3 homolog (502 aa).

2 stretches are compositionally biased toward basic and acidic residues: residues 1–13 (MGTE…PKEE) and 80–93 (PSSE…ESER). 2 disordered regions span residues 1–26 (MGTE…SLLE) and 47–103 (LEGH…NLVT). Residues Lys6 and Lys11 each participate in a glycyl lysine isopeptide (Lys-Gly) (interchain with G-Cter in SUMO2) cross-link. 13 consecutive C2H2-type zinc fingers follow at residues 141-163 (HTCK…MRVH), 169-191 (FECK…LRIH), 197-219 (FACN…HRIH), 225-247 (YKCE…QRIH), 253-275 (YECN…QRIH), 281-303 (HECN…QKIH), 309-331 (YLCN…QRIH), 337-359 (YECN…IRIH), 365-387 (YVCK…ERIH), 393-415 (YECF…QRIH), 421-443 (HQCN…QKIH), 449-471 (YECS…QRIH), and 477-499 (YECQ…QSVH).

Belongs to the krueppel C2H2-type zinc-finger protein family.

The protein localises to the nucleus. Functionally, may be involved in transcriptional regulation. The polypeptide is Zinc finger protein 3 homolog (ZFP3) (Homo sapiens (Human)).